The following is a 102-amino-acid chain: uncharacterized protein (102 aa).

The chain crosses the membrane as a helical span at residues 5–27 (IYRSNLVIVITLFVSLSYYHTCF).

It localises to the host membrane. This is an uncharacterized protein from Microplitis demolitor (Parasitoid wasp).